Here is a 233-residue protein sequence, read N- to C-terminus: ATP-dependent Clp protease proteolytic subunit 2 (233 aa).

Catalysis depends on serine 116, which acts as the Nucleophile. The active site involves histidine 141. Positions 214–233 are disordered; sequence EGLKSIQPNGEAADDSEDDA.

It belongs to the peptidase S14 family. In terms of assembly, fourteen ClpP subunits assemble into 2 heptameric rings which stack back to back to give a disk-like structure with a central cavity, resembling the structure of eukaryotic proteasomes.

The protein resides in the cytoplasm. It catalyses the reaction Hydrolysis of proteins to small peptides in the presence of ATP and magnesium. alpha-casein is the usual test substrate. In the absence of ATP, only oligopeptides shorter than five residues are hydrolyzed (such as succinyl-Leu-Tyr-|-NHMec, and Leu-Tyr-Leu-|-Tyr-Trp, in which cleavage of the -Tyr-|-Leu- and -Tyr-|-Trp bonds also occurs).. Functionally, cleaves peptides in various proteins in a process that requires ATP hydrolysis. Has a chymotrypsin-like activity. Plays a major role in the degradation of misfolded proteins. This chain is ATP-dependent Clp protease proteolytic subunit 2, found in Salinibacter ruber (strain DSM 13855 / M31).